The primary structure comprises 323 residues: tRNA U34 carboxymethyltransferase (323 aa).

Carboxy-S-adenosyl-L-methionine contacts are provided by residues lysine 91, tryptophan 105, lysine 110, glycine 130, 152–154 (DPT), 181–182 (IE), methionine 196, tyrosine 200, and arginine 315.

It belongs to the class I-like SAM-binding methyltransferase superfamily. CmoB family. Homotetramer.

The catalysed reaction is carboxy-S-adenosyl-L-methionine + 5-hydroxyuridine(34) in tRNA = 5-carboxymethoxyuridine(34) in tRNA + S-adenosyl-L-homocysteine + H(+). Functionally, catalyzes carboxymethyl transfer from carboxy-S-adenosyl-L-methionine (Cx-SAM) to 5-hydroxyuridine (ho5U) to form 5-carboxymethoxyuridine (cmo5U) at position 34 in tRNAs. This is tRNA U34 carboxymethyltransferase from Escherichia coli O7:K1 (strain IAI39 / ExPEC).